The primary structure comprises 228 residues: UPF0173 metal-dependent hydrolase lin1612 (228 aa).

This sequence belongs to the UPF0173 family.

The chain is UPF0173 metal-dependent hydrolase lin1612 from Listeria innocua serovar 6a (strain ATCC BAA-680 / CLIP 11262).